We begin with the raw amino-acid sequence, 332 residues long: ADP-L-glycero-D-manno-heptose-6-epimerase (332 aa).

Residues F10–I11, D31–D32, K38, Q74–S78, and N91 contribute to the NADP(+) site. Catalysis depends on Y138, which acts as the Proton acceptor. K142 provides a ligand contact to NADP(+). N167 contacts substrate. Residues V168 and K176 each coordinate NADP(+). K176 functions as the Proton acceptor in the catalytic mechanism. Substrate is bound by residues R178, H185, F199–W202, R212, and Y291.

It belongs to the NAD(P)-dependent epimerase/dehydratase family. HldD subfamily. As to quaternary structure, homopentamer. NADP(+) serves as cofactor.

It catalyses the reaction ADP-D-glycero-beta-D-manno-heptose = ADP-L-glycero-beta-D-manno-heptose. Its pathway is nucleotide-sugar biosynthesis; ADP-L-glycero-beta-D-manno-heptose biosynthesis; ADP-L-glycero-beta-D-manno-heptose from D-glycero-beta-D-manno-heptose 7-phosphate: step 4/4. In terms of biological role, catalyzes the interconversion between ADP-D-glycero-beta-D-manno-heptose and ADP-L-glycero-beta-D-manno-heptose via an epimerization at carbon 6 of the heptose. The polypeptide is ADP-L-glycero-D-manno-heptose-6-epimerase (Bordetella avium (strain 197N)).